The chain runs to 349 residues: MENIGTILRLAEDKILLVQNLKALQEYKVEFLGKNGIVTGELKKLGSLNEQERKEFGLKINKLKDKIQNIIKAKAEILEEQELNFKLAADKIDLTIPARRYKQGSIHPITQCSEELIQVFSQFGFTIENGPNIENDFHNFTALNFEDDHPARQMHDTFYLKSQENNKPLLLRTHTSTVQIRAMKNGKPPFRFIAPGRTYRSDSDMTHTPMFHQIEGLVMDKNINMGHLKYVITTFIKSFFENSNIELRFRPSFFPFTEPSAEVDIRMNKNDKWLEVLGCGMVHPNVLKNVGIDSSEYQGFAFGLGVERFAMLKYNIKDLRQFFEGDMRWLKHYNFGSFDIPNLAGGLTK.

Glu258 is a Mg(2+) binding site.

This sequence belongs to the class-II aminoacyl-tRNA synthetase family. Phe-tRNA synthetase alpha subunit type 1 subfamily. In terms of assembly, tetramer of two alpha and two beta subunits. Requires Mg(2+) as cofactor.

It localises to the cytoplasm. It carries out the reaction tRNA(Phe) + L-phenylalanine + ATP = L-phenylalanyl-tRNA(Phe) + AMP + diphosphate + H(+). The protein is Phenylalanine--tRNA ligase alpha subunit of Rickettsia rickettsii (strain Sheila Smith).